The sequence spans 355 residues: D-alanine--D-alanine ligase (355 aa).

In terms of domain architecture, ATP-grasp spans Lys-143 to Asp-350. Ile-178–Glu-233 contributes to the ATP binding site. Mg(2+)-binding residues include Asp-303, Glu-317, and Asn-319.

The protein belongs to the D-alanine--D-alanine ligase family. The cofactor is Mg(2+). Requires Mn(2+) as cofactor.

It localises to the cytoplasm. The enzyme catalyses 2 D-alanine + ATP = D-alanyl-D-alanine + ADP + phosphate + H(+). It participates in cell wall biogenesis; peptidoglycan biosynthesis. Functionally, cell wall formation. The sequence is that of D-alanine--D-alanine ligase from Prochlorococcus marinus subsp. pastoris (strain CCMP1986 / NIES-2087 / MED4).